The chain runs to 252 residues: 3-dehydroquinate dehydratase (252 aa).

3-dehydroquinate contacts are provided by residues serine 21, 46-48 (EWR), and arginine 82. The active-site Proton donor/acceptor is the histidine 143. Lysine 170 (schiff-base intermediate with substrate) is an active-site residue. Residues arginine 213, serine 232, and glutamine 236 each contribute to the 3-dehydroquinate site.

The protein belongs to the type-I 3-dehydroquinase family. As to quaternary structure, homodimer.

The catalysed reaction is 3-dehydroquinate = 3-dehydroshikimate + H2O. It participates in metabolic intermediate biosynthesis; chorismate biosynthesis; chorismate from D-erythrose 4-phosphate and phosphoenolpyruvate: step 3/7. Involved in the third step of the chorismate pathway, which leads to the biosynthesis of aromatic amino acids. Catalyzes the cis-dehydration of 3-dehydroquinate (DHQ) and introduces the first double bond of the aromatic ring to yield 3-dehydroshikimate. The protein is 3-dehydroquinate dehydratase of Salmonella choleraesuis (strain SC-B67).